Consider the following 225-residue polypeptide: NAD(P)H-quinone oxidoreductase subunit K, chloroplastic (225 aa).

The [4Fe-4S] cluster site is built by Cys-43, Cys-44, Cys-108, and Cys-139.

Belongs to the complex I 20 kDa subunit family. NDH is composed of at least 16 different subunits, 5 of which are encoded in the nucleus. [4Fe-4S] cluster serves as cofactor.

It localises to the plastid. The protein localises to the chloroplast thylakoid membrane. The enzyme catalyses a plastoquinone + NADH + (n+1) H(+)(in) = a plastoquinol + NAD(+) + n H(+)(out). It catalyses the reaction a plastoquinone + NADPH + (n+1) H(+)(in) = a plastoquinol + NADP(+) + n H(+)(out). In terms of biological role, NDH shuttles electrons from NAD(P)H:plastoquinone, via FMN and iron-sulfur (Fe-S) centers, to quinones in the photosynthetic chain and possibly in a chloroplast respiratory chain. The immediate electron acceptor for the enzyme in this species is believed to be plastoquinone. Couples the redox reaction to proton translocation, and thus conserves the redox energy in a proton gradient. This chain is NAD(P)H-quinone oxidoreductase subunit K, chloroplastic, found in Illicium oligandrum (Star anise).